Here is a 247-residue protein sequence, read N- to C-terminus: Ice-binding protein (247 aa).

Positions 1-19 (MTFSILSIFVFGLISSSVA) are cleaved as a signal peptide. The N-linked (GlcNAc...) asparagine glycan is linked to Asn-219.

Belongs to the ice-binding protein family.

The protein localises to the secreted. Functionally, binds ice crystals and most probably inhibits their growth in order to prevent cell damage from extracellular ice. In Flammulina populicola (Enokitake mushroom), this protein is Ice-binding protein.